The chain runs to 483 residues: SWI/SNF-related matrix-associated actin-dependent regulator of chromatin subfamily D member 3 (483 aa).

Alanine 2 bears the N-acetylalanine mark. The tract at residues 26 to 102 is disordered; that stretch reads VRPGMPSGAR…ARSRSAKRRK (77 aa). Over residues 78-87 the composition is skewed to low complexity; that stretch reads QSQAQSQGQP. Phosphoserine is present on serine 178. In terms of domain architecture, SWIB/MDM2 spans 258–335; that stretch reads YQPPQFKLDP…PQRLTALLLP (78 aa).

It belongs to the SMARCD family. In terms of assembly, component of the multiprotein chromatin-remodeling complexes SWI/SNF: SWI/SNF-A (BAF), SWI/SNF-B (PBAF) and related complexes. The canonical complex contains a catalytic subunit (either SMARCA4/BRG1/BAF190A or SMARCA2/BRM/BAF190B) and at least SMARCE1, ACTL6A/BAF53, SMARCC1/BAF155, SMARCC2/BAF170, and SMARCB1/SNF5/BAF47. Other subunits specific to each of the complexes may also be present permitting several possible combinations developmentally and tissue specific. Component of the BAF complex, which includes at least actin (ACTB), ARID1A/BAF250A, ARID1B/BAF250B, SMARCA2/BRM, SMARCA4/BRG1/BAF190A, ACTL6A/BAF53, ACTL6B/BAF53B, SMARCE1/BAF57, SMARCC1/BAF155, SMARCC2/BAF170, SMARCB1/SNF5/INI1, and one or more SMARCD1/BAF60A, SMARCD2/BAF60B, or SMARCD3/BAF60C. In muscle cells, the BAF complex also contains DPF3. Component of neural progenitors-specific chromatin remodeling complex (npBAF complex) composed of at least, ARID1A/BAF250A or ARID1B/BAF250B, SMARCD1/BAF60A, SMARCD3/BAF60C, SMARCA2/BRM/BAF190B, SMARCA4/BRG1/BAF190A, SMARCB1/BAF47, SMARCC1/BAF155, SMARCE1/BAF57, SMARCC2/BAF170, PHF10/BAF45A, ACTL6A/BAF53A and actin. Component of neuron-specific chromatin remodeling complex (nBAF complex) composed of at least, ARID1A/BAF250A or ARID1B/BAF250B, SMARCD1/BAF60A, SMARCD3/BAF60C, SMARCA2/BRM/BAF190B, SMARCA4/BRG1/BAF190A, SMARCB1/BAF47, SMARCC1/BAF155, SMARCE1/BAF57, SMARCC2/BAF170, DPF1/BAF45B, DPF3/BAF45C, ACTL6B/BAF53B and actin. May be a component of the SWI/SNF-B (PBAF) chromatin remodeling complex, at least composed of SMARCA4/BRG1, SMARCB1/BAF47/SNF5, ACTL6A/BAF53A or ACTL6B/BAF53B, SMARCE1/BAF57, SMARCD1/BAF60A, SMARCD2/BAF60B, perhaps SMARCD3/BAF60C, SMARCC1/BAF155, SMARCC2/BAF170, PBRM1/BAF180, ARID2/BAF200 and actin. Interacts with SMARCA4/BRG1/BAF190A. Component of SWI/SNF (GBAF) subcomplex, which includes at least BICRA or BICRAL (mutually exclusive), BRD9, SS18, SMARCA2/BRM, SMARCA4/BRG1/BAF190A, ACTL6A/BAF53, SMARCC1/BAF155, and SMARCD1/BAF60A. The precise distribution of the related SMARCD1, SMARCD2 and SMARCD3 proteins among these and other SWI/SNF nucleosome-remodeling complexes is not fully known. May allow recruitment of SWI/SNF containing complexes specifically to promoters where these factors are located. Also interacts with several nuclear receptors including PPARG/NR1C3, RXRA/NR1F1, ESR1, NR5A1, NR5A2/LRH1 and other transcriptional activators including the HLH protein SREBF1/SREBP1 and the homeobox protein PBX1. Interacts with PRDM1/BLIMP1. Isoform 2 and isoform 1 are expressed in brain, heart, kidney, placenta, prostate, salivary gland, spleen, testis, thyroid, trachea and uterus. Isoform 1 is also expressed in skeletal muscle and adipose tissue.

The protein resides in the nucleus. Involved in transcriptional activation and repression of select genes by chromatin remodeling (alteration of DNA-nucleosome topology). Component of SWI/SNF chromatin remodeling complexes that carry out key enzymatic activities, changing chromatin structure by altering DNA-histone contacts within a nucleosome in an ATP-dependent manner. Stimulates nuclear receptor mediated transcription. Belongs to the neural progenitors-specific chromatin remodeling complex (npBAF complex) and the neuron-specific chromatin remodeling complex (nBAF complex). During neural development a switch from a stem/progenitor to a postmitotic chromatin remodeling mechanism occurs as neurons exit the cell cycle and become committed to their adult state. The transition from proliferating neural stem/progenitor cells to postmitotic neurons requires a switch in subunit composition of the npBAF and nBAF complexes. As neural progenitors exit mitosis and differentiate into neurons, npBAF complexes which contain ACTL6A/BAF53A and PHF10/BAF45A, are exchanged for homologous alternative ACTL6B/BAF53B and DPF1/BAF45B or DPF3/BAF45C subunits in neuron-specific complexes (nBAF). The npBAF complex is essential for the self-renewal/proliferative capacity of the multipotent neural stem cells. The nBAF complex along with CREST plays a role regulating the activity of genes essential for dendrite growth. The protein is SWI/SNF-related matrix-associated actin-dependent regulator of chromatin subfamily D member 3 (SMARCD3) of Homo sapiens (Human).